The primary structure comprises 166 residues: Chorion protein S18 (166 aa).

The first 17 residues, 1 to 17, serve as a signal peptide directing secretion; sequence MMKFMCLFVCAIAAVSA.

The protein belongs to the chorion protein S15/S18 family.

It is found in the secreted. In terms of biological role, chorion membrane (egg shell) protein; plays a role in protecting the egg from the environment. This is Chorion protein S18 (Cp18) from Drosophila grimshawi (Hawaiian fruit fly).